The chain runs to 565 residues: Oxygen-dependent choline dehydrogenase (565 aa).

FAD is bound at residue 6-35; it reads DYIIVGAGSAGNTLATRLTEDAGVTVLLLE. H475 functions as the Proton acceptor in the catalytic mechanism.

It belongs to the GMC oxidoreductase family. Requires FAD as cofactor.

It carries out the reaction choline + A = betaine aldehyde + AH2. The catalysed reaction is betaine aldehyde + NAD(+) + H2O = glycine betaine + NADH + 2 H(+). The protein operates within amine and polyamine biosynthesis; betaine biosynthesis via choline pathway; betaine aldehyde from choline (cytochrome c reductase route): step 1/1. In terms of biological role, involved in the biosynthesis of the osmoprotectant glycine betaine. Catalyzes the oxidation of choline to betaine aldehyde and betaine aldehyde to glycine betaine at the same rate. This chain is Oxygen-dependent choline dehydrogenase, found in Pseudomonas putida (strain GB-1).